The primary structure comprises 614 residues: MDRKVAVPEDGPPVVSWLPEEGEKLDQEGEDQVKDRGQWTNKMEFVLSVAGEIIGLGNVWRFPYLCYKNGGGAFFIPYFIFFFTCGIPVFFLEVALGQYTSQGSVTAWRKICPLLQGIGLASVVIESYLNIYYIIILAWALFYLFSSFTSELPWTTCTNTWNTEHCMDFLNHSGARTATSSENFTSPVMEFWERRVLGITSGIHDLGALRWELALCLLLAWLICYFCIWKGVKTTGKVVYFTATFPYLMLVILLIRGITLPGAYQGVIYYLKPDLLRLKDPQVWMDAGTQIFFSFAICQGCLTALGSYNKYHNNCYRDSIALCFLNSATSFAAGFVVFSILGFMAQEQGLPISEVAESGPGLAFIAFPKAVTMMPLSQLWSCLFFIMLIFLGLDSQFVCVECLVTASMDMFPSQLRKSGRRELLILAIAVFCYLAGLFLVTEGGMYIFQLFDYYASSGICLLFLAMFEVICISWVYGADRFYDNIEDMIGYRPWPLVKISWLFLTPGLCLATFLFSLSQYTPLKYNNIYVYPPWGYSIGWFLALSSMICVPLFVIITLLKTRGSFKKRLRQLTTPDPSLPQPKQHLYLDGGTSQDCGPSPTKEGLIVGEKETHL.

The interval 1 to 33 (MDRKVAVPEDGPPVVSWLPEEGEKLDQEGEDQV) is disordered. Topologically, residues 1–44 (MDRKVAVPEDGPPVVSWLPEEGEKLDQEGEDQVKDRGQWTNKME) are cytoplasmic. Residues 21–33 (EGEKLDQEGEDQV) show a composition bias toward basic and acidic residues. 3 helical membrane-spanning segments follow: residues 45-65 (FVLSVAGEIIGLGNVWRFPYL), 73-92 (AFFIPYFIFFFTCGIPVFFL), and 117-137 (GIGLASVVIESYLNIYYIIIL). The Extracellular segment spans residues 138–210 (AWALFYLFSS…SGIHDLGALR (73 aa)). Cysteines 157 and 166 form a disulfide. Asn171 and Asn183 each carry an N-linked (GlcNAc...) asparagine glycan. The next 9 helical transmembrane spans lie at 211 to 229 (WELALCLLLAWLICYFCIW), 238 to 255 (VVYFTATFPYLMLVILLI), 291 to 308 (IFFSFAICQGCLTALGSY), 320 to 341 (IALCFLNSATSFAAGFVVFSIL), 374 to 393 (MPLSQLWSCLFFIMLIFLGL), 423 to 441 (LLILAIAVFCYLAGLFLVT), 458 to 478 (GICLLFLAMFEVICISWVYGA), 499 to 518 (ISWLFLTPGLCLATFLFSLS), and 538 to 556 (IGWFLALSSMICVPLFVII). Residues 557-614 (TLLKTRGSFKKRLRQLTTPDPSLPQPKQHLYLDGGTSQDCGPSPTKEGLIVGEKETHL) lie on the Cytoplasmic side of the membrane. Residues 591-614 (GTSQDCGPSPTKEGLIVGEKETHL) form a disordered region.

The protein belongs to the sodium:neurotransmitter symporter (SNF) (TC 2.A.22) family. SLC6A12 subfamily. Interacts with LIN7C. Kidney.

The protein resides in the basolateral cell membrane. The protein localises to the cell membrane. The catalysed reaction is 4-aminobutanoate(out) + chloride(out) + 3 Na(+)(out) = 4-aminobutanoate(in) + chloride(in) + 3 Na(+)(in). It catalyses the reaction glycine betaine(out) + 2 chloride(out) + 3 Na(+)(out) = glycine betaine(in) + 2 chloride(in) + 3 Na(+)(in). Its function is as follows. Transporter that mediates cellular uptake of betaine and GABA in a sodium- and chloride-dependent process. May have a role in regulation of GABAergic transmission in the brain through the reuptake of GABA into presynaptic terminals, as well as in osmotic regulation. Probably also involved in renal and hepatic osmotic regulation. This is Sodium- and chloride-dependent betaine transporter (SLC6A12) from Canis lupus familiaris (Dog).